The sequence spans 68 residues: U-actitoxin-Avt1 (68 aa).

The first 22 residues, 1 to 22 (MNSKAIISVFLIMLVVVSCTQA), serve as a signal peptide directing secretion. The propeptide occupies 23–40 (TYETEDDDEPGPRHSEKR). The segment at 24–50 (YETEDDDEPGPRHSEKRSCARGCGGDS) is disordered. Residues 32-41 (PGPRHSEKRS) are compositionally biased toward basic and acidic residues. 3 disulfides stabilise this stretch: Cys42-Cys54, Cys46-Cys59, and Cys52-Cys66.

Its function is as follows. Stable protein with probable toxin activity. Does not show activity on all channels tested. Shows no hemolytic activity on rat erythrocytes. This chain is U-actitoxin-Avt1, found in Aulactinia veratra (Green snakelock anemone).